The sequence spans 266 residues: Small ribosomal subunit protein eS1 (266 aa).

The interval 234 to 266 is disordered; the sequence is EGGTGTATKATGDDTGAKVERADGYEPPIQETV. A compositionally biased stretch (basic and acidic residues) spans 244–257; it reads TGDDTGAKVERADG.

It belongs to the eukaryotic ribosomal protein eS1 family. Component of the small ribosomal subunit. Mature ribosomes consist of a small (40S) and a large (60S) subunit. The 40S subunit contains about 33 different proteins and 1 molecule of RNA (18S). The 60S subunit contains about 49 different proteins and 3 molecules of RNA (28S, 5.8S and 5S). Part of the small subunit (SSU) processome, composed of more than 70 proteins and the RNA chaperone small nucleolar RNA (snoRNA) U3.

The protein resides in the cytoplasm. It localises to the nucleus. The protein localises to the nucleolus. Functionally, component of the small ribosomal subunit. The ribosome is a large ribonucleoprotein complex responsible for the synthesis of proteins in the cell. Part of the small subunit (SSU) processome, first precursor of the small eukaryotic ribosomal subunit. During the assembly of the SSU processome in the nucleolus, many ribosome biogenesis factors, an RNA chaperone and ribosomal proteins associate with the nascent pre-rRNA and work in concert to generate RNA folding, modifications, rearrangements and cleavage as well as targeted degradation of pre-ribosomal RNA by the RNA exosome. May play a role during erythropoiesis. This chain is Small ribosomal subunit protein eS1 (rps3a), found in Solea senegalensis (Senegalese sole).